The sequence spans 451 residues: tRNA modification GTPase MnmE (451 aa).

(6S)-5-formyl-5,6,7,8-tetrahydrofolate contacts are provided by R37, E95, and K135. In terms of domain architecture, TrmE-type G spans 232–376 (GLSIVIMGPP…LVEAIADFAG (145 aa)). N242 serves as a coordination point for K(+). GTP is bound by residues 242-247 (NAGKST), 261-267 (SEIAGTT), and 286-289 (DTAG). S246 lines the Mg(2+) pocket. K(+)-binding residues include S261, I263, and T266. T267 is a binding site for Mg(2+). K451 provides a ligand contact to (6S)-5-formyl-5,6,7,8-tetrahydrofolate.

The protein belongs to the TRAFAC class TrmE-Era-EngA-EngB-Septin-like GTPase superfamily. TrmE GTPase family. In terms of assembly, homodimer. Heterotetramer of two MnmE and two MnmG subunits. Requires K(+) as cofactor.

It localises to the cytoplasm. In terms of biological role, exhibits a very high intrinsic GTPase hydrolysis rate. Involved in the addition of a carboxymethylaminomethyl (cmnm) group at the wobble position (U34) of certain tRNAs, forming tRNA-cmnm(5)s(2)U34. The chain is tRNA modification GTPase MnmE from Beijerinckia indica subsp. indica (strain ATCC 9039 / DSM 1715 / NCIMB 8712).